Reading from the N-terminus, the 668-residue chain is UvrABC system protein B (668 aa).

In terms of domain architecture, Helicase ATP-binding spans 36–276; it reads DNIKGGEKAQ…EEAIKNIMEE (241 aa). 49–56 provides a ligand contact to ATP; sequence GATGTGKT. The short motif at 102-125 is the Beta-hairpin element; sequence YYDYYQPEAYVPSSDTYIEKDSSV. In terms of domain architecture, Helicase C-terminal spans 440-606; it reads QMDDLLGEIN…TIKKEIRDLI (167 aa). The UVR domain maps to 632–667; it reads QEAIKKLQKQMHEAAELLDFELAAQIRDMVLELKSM.

It belongs to the UvrB family. Forms a heterotetramer with UvrA during the search for lesions. Interacts with UvrC in an incision complex.

The protein resides in the cytoplasm. Functionally, the UvrABC repair system catalyzes the recognition and processing of DNA lesions. A damage recognition complex composed of 2 UvrA and 2 UvrB subunits scans DNA for abnormalities. Upon binding of the UvrA(2)B(2) complex to a putative damaged site, the DNA wraps around one UvrB monomer. DNA wrap is dependent on ATP binding by UvrB and probably causes local melting of the DNA helix, facilitating insertion of UvrB beta-hairpin between the DNA strands. Then UvrB probes one DNA strand for the presence of a lesion. If a lesion is found the UvrA subunits dissociate and the UvrB-DNA preincision complex is formed. This complex is subsequently bound by UvrC and the second UvrB is released. If no lesion is found, the DNA wraps around the other UvrB subunit that will check the other stand for damage. This chain is UvrABC system protein B, found in Streptococcus thermophilus (strain ATCC BAA-491 / LMD-9).